A 313-amino-acid chain; its full sequence is HTH-type transcriptional regulator CysB (313 aa).

The HTH lysR-type domain occupies 1-59 (MNLHQFRFVREAVRQNFNLTEAAKALYTSQPGVSKAIIELEDELGVEIFTRHGKRVRSL). Residues 19-38 (LTEAAKALYTSQPGVSKAII) constitute a DNA-binding region (H-T-H motif).

This sequence belongs to the LysR transcriptional regulatory family.

In terms of biological role, transcriptional regulator preferentially involved in the control of sulfate transport and reduction. Binds to DNA at target promoter regions. This chain is HTH-type transcriptional regulator CysB, found in Burkholderia cenocepacia (strain ATCC BAA-245 / DSM 16553 / LMG 16656 / NCTC 13227 / J2315 / CF5610) (Burkholderia cepacia (strain J2315)).